The sequence spans 487 residues: Glutamyl-tRNA(Gln) amidotransferase subunit A (487 aa).

Catalysis depends on charge relay system residues Lys79 and Ser158. The active-site Acyl-ester intermediate is Ser182.

It belongs to the amidase family. GatA subfamily. In terms of assembly, heterotrimer of A, B and C subunits.

It catalyses the reaction L-glutamyl-tRNA(Gln) + L-glutamine + ATP + H2O = L-glutaminyl-tRNA(Gln) + L-glutamate + ADP + phosphate + H(+). In terms of biological role, allows the formation of correctly charged Gln-tRNA(Gln) through the transamidation of misacylated Glu-tRNA(Gln) in organisms which lack glutaminyl-tRNA synthetase. The reaction takes place in the presence of glutamine and ATP through an activated gamma-phospho-Glu-tRNA(Gln). This Ehrlichia canis (strain Jake) protein is Glutamyl-tRNA(Gln) amidotransferase subunit A.